The sequence spans 602 residues: MSRRSLSLQFPLLLLLLLLPPPPVLLTDAGVPSPVNPCCYYPCQNQGVCVRFGLDHYQCDCTRTGYSGPNCTIPEIWTWLRSSLRPSPSFTHFLLTHGYWIWEFVNATFIREVLMRLVITVRSNLIPSPPTYNTAHDYISWESFSNVSYYTRILPSVPKDCPTPMGTKGKKQLPDIHLLAQRLLLRREFIPGPQGTNVLFAFFAQHFTHQFFKTSGKMGPGFTKALGHGVDLGHIYGDSLERQYHLRLFKDGKLKYQVLDGEVYPPSVEQASVLMRYPPGVPPEKQMAVGQEVFGLLPGLMLFSTIWLREHNRVCDLLKEEHPTWDDEQLFQTTRLILIGETIKIIIEEYVQHLSGYFLQLKFDPELLFRAQFQYRNRIALEFNHLYHWHPLMPDSFQVGSQEYSYEQFLFNTSMLVDYGVEALVDAFSRQRAGRIGGGRNFDYHVLHVAEDVIKESREMRLQSFNEYRKRFGLKPYTSFQEFTGEKEMAAELEELYGDIDALEFYPGLMLEKCQPNSLFGESMIEMGAPFSLKGLLGNPICSPEYWKPSTFGGDVGFNIVNTASLKKLVCLNTKTCPYVSFRVPDYPGDDGSVFVRPSTEL.

An N-terminal signal peptide occupies residues 1-26; that stretch reads MSRRSLSLQFPLLLLLLLLPPPPVLL. The EGF-like domain occupies 34 to 72; the sequence is PVNPCCYYPCQNQGVCVRFGLDHYQCDCTRTGYSGPNCT. Intrachain disulfides connect Cys38–Cys49, Cys39–Cys161, Cys43–Cys59, and Cys61–Cys71. N-linked (GlcNAc...) asparagine glycans are attached at residues Asn70, Asn106, and Asn146. The Proton acceptor role is filled by His209. Tyr387 (for cyclooxygenase activity) is an active-site residue. His390 contacts heme b. N-linked (GlcNAc...) asparagine glycosylation occurs at Asn412. Cys571 and Cys577 form a disulfide bridge.

It belongs to the prostaglandin G/H synthase family. As to quaternary structure, homodimer. Heme b is required as a cofactor.

It localises to the microsome membrane. Its subcellular location is the endoplasmic reticulum membrane. It catalyses the reaction (5Z,8Z,11Z,14Z)-eicosatetraenoate + AH2 + 2 O2 = prostaglandin H2 + A + H2O. It carries out the reaction (5Z,8Z,11Z,14Z)-eicosatetraenoate + 2 O2 = prostaglandin G2. The catalysed reaction is prostaglandin G2 + AH2 = prostaglandin H2 + A + H2O. The enzyme catalyses (9Z,12Z)-octadecadienoate + AH2 + O2 = (9R)-hydroxy-(10E,12Z)-octadecadienoate + A + H2O. It catalyses the reaction (9Z,12Z)-octadecadienoate + AH2 + O2 = (9S)-hydroxy-(10E,12Z)-octadecadienoate + A + H2O. It carries out the reaction (9Z,12Z)-octadecadienoate + AH2 + O2 = (13S)-hydroxy-(9Z,11E)-octadecadienoate + A + H2O. The catalysed reaction is (9Z,12Z)-octadecadienoate + AH2 + O2 = (13R)-hydroxy-(9Z,11E)-octadecadienoate + A + H2O. It functions in the pathway lipid metabolism; prostaglandin biosynthesis. The cyclooxygenase activity is inhibited by nonsteroidal anti-inflammatory drugs (NSAIDs) including ibuprofen, flurbiprofen, ketoprofen, naproxen, flurbiprofen, anirolac, fenclofenac and diclofenac. In terms of biological role, dual cyclooxygenase and peroxidase that plays an important role in the biosynthesis pathway of prostanoids, a class of C20 oxylipins mainly derived from arachidonate ((5Z,8Z,11Z,14Z)-eicosatetraenoate, AA, C20:4(n-6)), with a particular role in the inflammatory response. The cyclooxygenase activity oxygenates AA to the hydroperoxy endoperoxide prostaglandin G2 (PGG2), and the peroxidase activity reduces PGG2 to the hydroxy endoperoxide prostaglandin H2 (PGH2), the precursor of all 2-series prostaglandins and thromboxanes. This complex transformation is initiated by abstraction of hydrogen at carbon 13 (with S-stereochemistry), followed by insertion of molecular O2 to form the endoperoxide bridge between carbon 9 and 11 that defines prostaglandins. The insertion of a second molecule of O2 (bis-oxygenase activity) yields a hydroperoxy group in PGG2 that is then reduced to PGH2 by two electrons. Involved in the constitutive production of prostanoids in particular in the stomach and platelets. In gastric epithelial cells, it is a key step in the generation of prostaglandins, such as prostaglandin E2 (PGE2), which plays an important role in cytoprotection. In platelets, it is involved in the generation of thromboxane A2 (TXA2), which promotes platelet activation and aggregation, vasoconstriction and proliferation of vascular smooth muscle cells. Can also use linoleate (LA, (9Z,12Z)-octadecadienoate, C18:2(n-6)) as substrate and produce hydroxyoctadecadienoates (HODEs) in a regio- and stereospecific manner, being (9R)-HODE ((9R)-hydroxy-(10E,12Z)-octadecadienoate) and (13S)-HODE ((13S)-hydroxy-(9Z,11E)-octadecadienoate) its major products. In Rattus norvegicus (Rat), this protein is Prostaglandin G/H synthase 1.